The chain runs to 545 residues: Capsular polysaccharide phosphotransferase SacB (545 aa).

Belongs to the stealth family.

Part of a capsular biosynthesis operon and has been suggested to be the polymerase that links individual UDP-N-acetyl-D-mannosamine monomers. In serotype A the capsule is composed of repeated units of (alpha 1-6)-linked N-acetyl-D-mannosamine-1-phosphate. Non-polar disruption of this open reading frame prevented capsule synthesis. The protein is Capsular polysaccharide phosphotransferase SacB (sacB) of Neisseria meningitidis serogroup A.